A 431-amino-acid polypeptide reads, in one-letter code: Chaperone SurA (431 aa).

Residues M1–A20 form the signal peptide. 2 consecutive PpiC domains span residues N171–D272 and V282–D382.

It localises to the periplasm. It carries out the reaction [protein]-peptidylproline (omega=180) = [protein]-peptidylproline (omega=0). Its function is as follows. Chaperone involved in the correct folding and assembly of outer membrane proteins. Recognizes specific patterns of aromatic residues and the orientation of their side chains, which are found more frequently in integral outer membrane proteins. May act in both early periplasmic and late outer membrane-associated steps of protein maturation. The chain is Chaperone SurA from Pectobacterium atrosepticum (strain SCRI 1043 / ATCC BAA-672) (Erwinia carotovora subsp. atroseptica).